Reading from the N-terminus, the 203-residue chain is Thymidylate kinase (203 aa).

Residue 14–21 (GGEGIGKS) participates in ATP binding.

Belongs to the thymidylate kinase family.

The catalysed reaction is dTMP + ATP = dTDP + ADP. Its function is as follows. Phosphorylation of dTMP to form dTDP in both de novo and salvage pathways of dTTP synthesis. This is Thymidylate kinase from Rickettsia conorii (strain ATCC VR-613 / Malish 7).